We begin with the raw amino-acid sequence, 217 residues long: Adenylate kinase (217 aa).

Residue G10 to T15 coordinates ATP. The NMP stretch occupies residues S30 to V59. AMP contacts are provided by residues T31, R36, E57 to V59, G85 to R88, and Q92. Positions G126–D163 are LID. Residues R127 and T136 to Y137 each bind ATP. R160 and R171 together coordinate AMP. Q199 serves as a coordination point for ATP.

It belongs to the adenylate kinase family. In terms of assembly, monomer.

It localises to the cytoplasm. It carries out the reaction AMP + ATP = 2 ADP. The protein operates within purine metabolism; AMP biosynthesis via salvage pathway; AMP from ADP: step 1/1. Catalyzes the reversible transfer of the terminal phosphate group between ATP and AMP. Plays an important role in cellular energy homeostasis and in adenine nucleotide metabolism. This Halalkalibacterium halodurans (strain ATCC BAA-125 / DSM 18197 / FERM 7344 / JCM 9153 / C-125) (Bacillus halodurans) protein is Adenylate kinase.